The sequence spans 309 residues: Homoserine kinase (309 aa).

Residue 91-101 coordinates ATP; the sequence is PIGSGLGSSAC.

The protein belongs to the GHMP kinase family. Homoserine kinase subfamily.

Its subcellular location is the cytoplasm. It catalyses the reaction L-homoserine + ATP = O-phospho-L-homoserine + ADP + H(+). The protein operates within amino-acid biosynthesis; L-threonine biosynthesis; L-threonine from L-aspartate: step 4/5. In terms of biological role, catalyzes the ATP-dependent phosphorylation of L-homoserine to L-homoserine phosphate. The chain is Homoserine kinase from Klebsiella pneumoniae subsp. pneumoniae (strain ATCC 700721 / MGH 78578).